A 393-amino-acid chain; its full sequence is Acetylornithine aminotransferase (393 aa).

Pyridoxal 5'-phosphate-binding positions include 95 to 96 and phenylalanine 127; that span reads GA. A N(2)-acetyl-L-ornithine-binding site is contributed by arginine 130. Residue 214 to 217 participates in pyridoxal 5'-phosphate binding; that stretch reads DEVQ. Residue lysine 243 is modified to N6-(pyridoxal phosphate)lysine. N(2)-acetyl-L-ornithine is bound at residue serine 271. Threonine 272 contributes to the pyridoxal 5'-phosphate binding site.

This sequence belongs to the class-III pyridoxal-phosphate-dependent aminotransferase family. ArgD subfamily. In terms of assembly, homodimer. Requires pyridoxal 5'-phosphate as cofactor.

It localises to the cytoplasm. The enzyme catalyses N(2)-acetyl-L-ornithine + 2-oxoglutarate = N-acetyl-L-glutamate 5-semialdehyde + L-glutamate. Its pathway is amino-acid biosynthesis; L-arginine biosynthesis; N(2)-acetyl-L-ornithine from L-glutamate: step 4/4. This Nitrosomonas europaea (strain ATCC 19718 / CIP 103999 / KCTC 2705 / NBRC 14298) protein is Acetylornithine aminotransferase.